Here is a 400-residue protein sequence, read N- to C-terminus: Phosphoglycerate kinase (400 aa).

Residues aspartate 22–asparagine 24, arginine 38, histidine 61–arginine 64, arginine 119, and arginine 152 contribute to the substrate site. ATP contacts are provided by residues lysine 205, glycine 296, glutamate 327, and glycine 353–threonine 356.

Belongs to the phosphoglycerate kinase family. In terms of assembly, monomer.

It is found in the cytoplasm. It carries out the reaction (2R)-3-phosphoglycerate + ATP = (2R)-3-phospho-glyceroyl phosphate + ADP. The protein operates within carbohydrate degradation; glycolysis; pyruvate from D-glyceraldehyde 3-phosphate: step 2/5. The protein is Phosphoglycerate kinase of Campylobacter jejuni subsp. jejuni serotype O:2 (strain ATCC 700819 / NCTC 11168).